We begin with the raw amino-acid sequence, 528 residues long: Phosphoenolpyruvate carboxykinase (ATP) (528 aa).

Substrate contacts are provided by Arg54, Tyr190, and Lys196. Residues Lys196, His215, and 231–239 contribute to the ATP site; that span reads GLSGTGKTT. Residues Lys196 and His215 each coordinate Mn(2+). Asp252 is a Mn(2+) binding site. ATP-binding residues include Glu280, Arg316, and Thr441. Substrate is bound at residue Arg316.

The protein belongs to the phosphoenolpyruvate carboxykinase (ATP) family. It depends on Mn(2+) as a cofactor.

The protein resides in the cytoplasm. The catalysed reaction is oxaloacetate + ATP = phosphoenolpyruvate + ADP + CO2. Its pathway is carbohydrate biosynthesis; gluconeogenesis. Its function is as follows. Involved in the gluconeogenesis. Catalyzes the conversion of oxaloacetate (OAA) to phosphoenolpyruvate (PEP) through direct phosphoryl transfer between the nucleoside triphosphate and OAA. In Sulfurimonas denitrificans (strain ATCC 33889 / DSM 1251) (Thiomicrospira denitrificans (strain ATCC 33889 / DSM 1251)), this protein is Phosphoenolpyruvate carboxykinase (ATP).